We begin with the raw amino-acid sequence, 590 residues long: Sperm-associated microtubule inner protein 4 (590 aa).

Position 219 is a phosphothreonine (Thr-219). 2 positions are modified to phosphoserine: Ser-407 and Ser-422. Residue Lys-427 forms a Glycyl lysine isopeptide (Lys-Gly) (interchain with G-Cter in SUMO2) linkage. A Phosphotyrosine modification is found at Tyr-442. Residue Ser-485 is modified to Phosphoserine. Lys-545 is covalently cross-linked (Glycyl lysine isopeptide (Lys-Gly) (interchain with G-Cter in SUMO2)). Residue Ser-547 is modified to Phosphoserine.

As to expression, predominantly expressed in the testes.

Its subcellular location is the cytoplasm. It is found in the cytoskeleton. It localises to the microtubule organizing center. The protein resides in the centrosome. The protein localises to the flagellum axoneme. Its function is as follows. Microtubule inner protein (MIP) part of the dynein-decorated doublet microtubules (DMTs) in flagellum axoneme. May serve to reinforce and thus stabilize the microtubule structure in the sperm flagella. This is Sperm-associated microtubule inner protein 4 from Homo sapiens (Human).